We begin with the raw amino-acid sequence, 831 residues long: Protein ADP-ribosyltransferase PARP3 (831 aa).

Residues 1–69 are disordered; the sequence is MVHETRSRTL…KKLKAEESDL (69 aa). Basic and acidic residues-rich tracts occupy residues 15–32 and 43–66; these read EEGK…KEQE and KTAD…KAEE. The region spanning 49–199 is the PADR1 zinc-binding domain; the sequence is EHDGEQEPSK…NKYPKRNLDD (151 aa). The interval 124 to 168 is zinc ribbon; the sequence is GPLDKCPVCGGQLECKGLKYNCTGTHSEWACCSFSTNNPSRRGGP. Zn(2+) is bound by residues cysteine 129, cysteine 132, cysteine 145, and cysteine 155. The BRCT domain occupies 200–290; the sequence is EGIFSGMMIA…EKQPLAAYDI (91 aa). Positions 338-439 constitute a WGR domain; that stretch reads GGHIYEKDGI…KKFKKKCMKM (102 aa). Positions 466 to 585 constitute a PARP alpha-helical domain; it reads HCKLDPSVTF…DINVASRLIG (120 aa). The 234-residue stretch at 594 to 827 folds into the PARP catalytic domain; sequence DPLSQCYKKL…VKYEEQNMEV (234 aa).

Belongs to the ARTD/PARP family.

Its subcellular location is the nucleus. It carries out the reaction L-aspartyl-[protein] + NAD(+) = 4-O-(ADP-D-ribosyl)-L-aspartyl-[protein] + nicotinamide. The enzyme catalyses L-glutamyl-[protein] + NAD(+) = 5-O-(ADP-D-ribosyl)-L-glutamyl-[protein] + nicotinamide. Functionally, involved in the base excision repair (BER) pathway, by catalyzing the poly(ADP-ribosyl)ation of a limited number of acceptor proteins involved in chromatin architecture and in DNA metabolism. This modification follows DNA damages and appears as an obligatory step in a detection/signaling pathway leading to the reparation of DNA strand breaks. The sequence is that of Protein ADP-ribosyltransferase PARP3 (PARP3) from Oryza sativa subsp. japonica (Rice).